The chain runs to 68 residues: Long neurotoxin 1 (68 aa).

5 disulfides stabilise this stretch: Cys3–Cys20, Cys13–Cys41, Cys26–Cys30, Cys45–Cys56, and Cys57–Cys62.

Belongs to the three-finger toxin family. Long-chain subfamily. Type II alpha-neurotoxin sub-subfamily. As to expression, expressed by the venom gland.

It is found in the secreted. Its function is as follows. Binds with high affinity to muscular (alpha-1/CHRNA1) and neuronal (alpha-7/CHRNA7) nicotinic acetylcholine receptor (nAChR) and inhibits acetylcholine from binding to the receptor, thereby impairing neuromuscular and neuronal transmission. In Aspidelaps scutatus (Shield-nose snake), this protein is Long neurotoxin 1.